Reading from the N-terminus, the 107-residue chain is Phosphoribosyl-ATP pyrophosphatase (107 aa).

Belongs to the PRA-PH family.

The protein resides in the cytoplasm. The enzyme catalyses 1-(5-phospho-beta-D-ribosyl)-ATP + H2O = 1-(5-phospho-beta-D-ribosyl)-5'-AMP + diphosphate + H(+). It participates in amino-acid biosynthesis; L-histidine biosynthesis; L-histidine from 5-phospho-alpha-D-ribose 1-diphosphate: step 2/9. This Bacillus cytotoxicus (strain DSM 22905 / CIP 110041 / 391-98 / NVH 391-98) protein is Phosphoribosyl-ATP pyrophosphatase.